Consider the following 275-residue polypeptide: Large ribosomal subunit protein uL2 (275 aa).

Positions 223–275 are disordered; that stretch reads AAMNANDHPHGGGEAKAGQGNPHPVTPWGVPTKGYKTRKNKRTQQFIVRDRRG.

It belongs to the universal ribosomal protein uL2 family. In terms of assembly, part of the 50S ribosomal subunit. Forms a bridge to the 30S subunit in the 70S ribosome.

One of the primary rRNA binding proteins. Required for association of the 30S and 50S subunits to form the 70S ribosome, for tRNA binding and peptide bond formation. It has been suggested to have peptidyltransferase activity; this is somewhat controversial. Makes several contacts with the 16S rRNA in the 70S ribosome. This Xanthomonas campestris pv. campestris (strain 8004) protein is Large ribosomal subunit protein uL2.